The sequence spans 42 residues: Potassium channel toxin gamma-KTx 1.8 (42 aa).

4 cysteine pairs are disulfide-bonded: cysteine 5–cysteine 23, cysteine 11–cysteine 34, cysteine 20–cysteine 39, and cysteine 24–cysteine 41.

This sequence belongs to the ergtoxin family. Gamma-KTx 1 subfamily. As to expression, expressed by the venom gland.

The protein localises to the secreted. In terms of biological role, blocks in a reversible manner human and rat Kv11.1/KCNH2/ERG1 potassium channels. Also completely and irreversibly blocks rat Kv11.2/KCNH6/ERG2 and human Kv11.3/KCNH7/ERG3 channels. Also weakly inhibits Kir2.1/KCNJ2 and Kv1.2/KCNA2 potassium channels. This Centruroides elegans (Bark scorpion) protein is Potassium channel toxin gamma-KTx 1.8.